We begin with the raw amino-acid sequence, 347 residues long: Eukaryotic translation initiation factor 3 subunit I (347 aa).

WD repeat units follow at residues Gly8 to Glu49, Gly50 to Thr89, Thr146 to Gly186, Ala198 to Thr237, Ala239 to Glu278, and Gly295 to Tyr336.

Belongs to the eIF-3 subunit I family. As to quaternary structure, component of the eukaryotic translation initiation factor 3 (eIF-3) complex.

It is found in the cytoplasm. In terms of biological role, component of the eukaryotic translation initiation factor 3 (eIF-3) complex, which is involved in protein synthesis of a specialized repertoire of mRNAs and, together with other initiation factors, stimulates binding of mRNA and methionyl-tRNAi to the 40S ribosome. The eIF-3 complex specifically targets and initiates translation of a subset of mRNAs involved in cell proliferation. The protein is Eukaryotic translation initiation factor 3 subunit I of Mycosarcoma maydis (Corn smut fungus).